The following is an 87-amino-acid chain: Tektin-2 (87 aa).

Positions 26–55 (VEEELLKEVEVIEATKKALQQRVSQAFQQL) form a coiled coil.

This sequence belongs to the tektin family. As to quaternary structure, microtubule inner protein component of sperm flagellar doublet microtubules. May interact with CCDC172. Post-translationally, tyrosine phosphorylated. Ubiquitinated, leading to its degradation. Deubiquitinated by USP16, promoting its stability. As to expression, detected in sperm flagella (at protein level).

It localises to the cytoplasm. It is found in the cytoskeleton. The protein resides in the cilium axoneme. Its subcellular location is the flagellum axoneme. The protein localises to the microtubule organizing center. In terms of biological role, microtubule inner protein (MIP) part of the dynein-decorated doublet microtubules (DMTs) in cilia and flagellar axoneme. Plays a key role in the assembly or attachment of the inner dynein arm to microtubules in sperm flagella and tracheal cilia. Forms filamentous polymers in the walls of ciliary and flagellar microtubules. The sequence is that of Tektin-2 from Mesocricetus auratus (Golden hamster).